The primary structure comprises 307 residues: tRNA-cytidine(32) 2-sulfurtransferase (307 aa).

Positions 44–49 match the PP-loop motif motif; sequence SGGKDS. Residues Cys119, Cys122, and Cys210 each contribute to the [4Fe-4S] cluster site.

This sequence belongs to the TtcA family. Homodimer. It depends on Mg(2+) as a cofactor. Requires [4Fe-4S] cluster as cofactor.

Its subcellular location is the cytoplasm. It carries out the reaction cytidine(32) in tRNA + S-sulfanyl-L-cysteinyl-[cysteine desulfurase] + AH2 + ATP = 2-thiocytidine(32) in tRNA + L-cysteinyl-[cysteine desulfurase] + A + AMP + diphosphate + H(+). It functions in the pathway tRNA modification. In terms of biological role, catalyzes the ATP-dependent 2-thiolation of cytidine in position 32 of tRNA, to form 2-thiocytidine (s(2)C32). The sulfur atoms are provided by the cysteine/cysteine desulfurase (IscS) system. The protein is tRNA-cytidine(32) 2-sulfurtransferase of Aliivibrio salmonicida (strain LFI1238) (Vibrio salmonicida (strain LFI1238)).